Consider the following 253-residue polypeptide: Phosphate import ATP-binding protein PstB (253 aa).

Residues 5–248 (IQVRDLNAYY…PSDKRTEDYI (244 aa)) enclose the ABC transporter domain. An ATP-binding site is contributed by 37–44 (GPSGCGKS).

This sequence belongs to the ABC transporter superfamily. Phosphate importer (TC 3.A.1.7) family. As to quaternary structure, the complex is composed of two ATP-binding proteins (PstB), two transmembrane proteins (PstC and PstA) and a solute-binding protein (PstS).

The protein localises to the cell inner membrane. The catalysed reaction is phosphate(out) + ATP + H2O = ADP + 2 phosphate(in) + H(+). Part of the ABC transporter complex PstSACB involved in phosphate import. Responsible for energy coupling to the transport system. The polypeptide is Phosphate import ATP-binding protein PstB (Koribacter versatilis (strain Ellin345)).